The sequence spans 285 residues: Dermonecrotic toxin LiSicTox-alphaIA2aii (285 aa).

Positions 1 to 5 (DVEER) are excised as a propeptide. The active site involves histidine 17. Residues glutamate 37 and aspartate 39 each contribute to the Mg(2+) site. The active-site Nucleophile is histidine 53. 2 cysteine pairs are disulfide-bonded: cysteine 57/cysteine 63 and cysteine 59/cysteine 202. Aspartate 97 serves as a coordination point for Mg(2+). Residue asparagine 262 is glycosylated (N-linked (GlcNAc...) asparagine).

The protein belongs to the arthropod phospholipase D family. Class II subfamily. Class IIa sub-subfamily. Mg(2+) is required as a cofactor. In terms of tissue distribution, expressed by the venom gland.

Its subcellular location is the secreted. The enzyme catalyses an N-(acyl)-sphingosylphosphocholine = an N-(acyl)-sphingosyl-1,3-cyclic phosphate + choline. The catalysed reaction is an N-(acyl)-sphingosylphosphoethanolamine = an N-(acyl)-sphingosyl-1,3-cyclic phosphate + ethanolamine. It catalyses the reaction a 1-acyl-sn-glycero-3-phosphocholine = a 1-acyl-sn-glycero-2,3-cyclic phosphate + choline. It carries out the reaction a 1-acyl-sn-glycero-3-phosphoethanolamine = a 1-acyl-sn-glycero-2,3-cyclic phosphate + ethanolamine. Its function is as follows. Dermonecrotic toxins cleave the phosphodiester linkage between the phosphate and headgroup of certain phospholipids (sphingolipid and lysolipid substrates), forming an alcohol (often choline) and a cyclic phosphate. This toxin acts on sphingomyelin (SM) with high activity. It may also act on ceramide phosphoethanolamine (CPE), lysophosphatidylcholine (LPC) and lysophosphatidylethanolamine (LPE), but not on lysophosphatidylserine (LPS), and lysophosphatidylglycerol (LPG). It acts by transphosphatidylation, releasing exclusively cyclic phosphate products as second products. Shows high hemolytic activity. Induces dermonecrosis, vascular permeability, edema, inflammatory response, and platelet aggregation. Also shows cytotoxicity against renal epithelial cells. In addition, also induces hemolysis in a complement-dependent manner and probably also in a complement-independent manner. The hemolysis provoked in a complement-independent manner may be composed of several steps. The toxin may bind to erythrocyte membranes, may hydrolyze membrane phospholipids (SM and LPC) thus generating metabolism products that may cause hemolysis, probably by provoking an increase of calcium inside cells. The calcium influx may be due to the opening of L-type calcium channels, since L-type calcium channel blockers inhibit calcium influx. In vivo, is lethal to mice when intraperitoneally injected. The polypeptide is Dermonecrotic toxin LiSicTox-alphaIA2aii (Loxosceles intermedia (Brown spider)).